Reading from the N-terminus, the 248-residue chain is 14-3-3-like protein 1 (248 aa).

It belongs to the 14-3-3 family. As to quaternary structure, interacts with daf-16 and sir-2.1. Interacts with atgl-1. Interacts with hcf-1.

It is found in the cytoplasm. The protein localises to the nucleus. In terms of biological role, required to modulate lifespan, in concert with hcf-1, acting redundantly with 14-3-3-like protein ftt-2. This is 14-3-3-like protein 1 (par-5) from Caenorhabditis elegans.